The following is a 293-amino-acid chain: 3-methyl-2-oxobutanoate hydroxymethyltransferase (293 aa).

The disordered stretch occupies residues 1–29; that stretch reads MTAAHDRSENQPGRPGGETTAPYGSAPRR. The Mg(2+) site is built by aspartate 73 and aspartate 112. 3-methyl-2-oxobutanoate is bound by residues 73 to 74, aspartate 112, and lysine 142; that span reads DS. Glutamate 144 serves as a coordination point for Mg(2+). Glutamate 210 functions as the Proton acceptor in the catalytic mechanism.

Belongs to the PanB family. As to quaternary structure, homodecamer; pentamer of dimers. Mg(2+) serves as cofactor.

It is found in the cytoplasm. The catalysed reaction is 3-methyl-2-oxobutanoate + (6R)-5,10-methylene-5,6,7,8-tetrahydrofolate + H2O = 2-dehydropantoate + (6S)-5,6,7,8-tetrahydrofolate. It functions in the pathway cofactor biosynthesis; (R)-pantothenate biosynthesis; (R)-pantoate from 3-methyl-2-oxobutanoate: step 1/2. Functionally, catalyzes the reversible reaction in which hydroxymethyl group from 5,10-methylenetetrahydrofolate is transferred onto alpha-ketoisovalerate to form ketopantoate. The chain is 3-methyl-2-oxobutanoate hydroxymethyltransferase from Saccharopolyspora erythraea (strain ATCC 11635 / DSM 40517 / JCM 4748 / NBRC 13426 / NCIMB 8594 / NRRL 2338).